A 1048-amino-acid polypeptide reads, in one-letter code: MGPPRHPQAGEIEAGGAGGGRRLQVEMSSQQFPRLGAPSTGLSQAPSQIANSGSAGLINPAATVNDESGRDSEVSAREHMSSSSSLQSREEKQEPVVVRPYPQVQMLSTHHAVASATPVAVTAPPAHLTPAVPLSFSEGLMKPPPKPTMPSRPIAPAPPSTLSLPPKVPGQVTVTMESSIPQASAIPVATISGQQGHPSNLHHIMTTNVQMSIIRSNAPGPPLHIGASHLPRGAAAAAVMSSSKVTTVLRPTSQLPNAATAQPAVQHIIHQPIQSRPPVTTSNAIPPAVVATVSATRAQSPVITTTAAHATDSALSRPTLSIQHPPSAAISIQRPAQSRDVTTRITLPSHPALGTPKQQLHTMAQKTIFSTGTPVAAATVAPILATNTIPSATTAGSVSHTQAPTSTIVTMTVPSHSSHATAVTTSNIPVAKVVPQQITHTSPRIQPDYPAERSSLIPISGHRASPNPVAMETRSDNRPSVPVQFQYFLPTYPPSAYPLAAHTYTPITSSVSTIRQYPVSAQAPNSAITAQTGVGVASTVHLNPMQLMTVDASHARHIQGIQPAPISTQGIQPAPIGTPGIQPAPLGTQGIHSATPINTQGLQPAPMGTQQPQPEGKTSAVVLADGATIVANPISNPFSAAPAATTVVQTHSQSASTNAPAQGSSPRPSILRKKPATDGAKPKSEIHVSMATPVTVSMETVSNQNNDQPTIAVPPTAQQPPPTIPTMIAAASPPSQPAVALSTIPGAVPITPPITTIAAAPPPSVTVGGSLSSVLGPPVPEIKVKEEVEPMDIMRPVSAVPPLATNTVSPSLALLANNLSMPTSDLPPGASPRKKPRKQQHVISTEEGDMMETNSTDDEKSTAKSLLVKAEKRKSPPKEYIDEEGVRYVPVRPRPPITLLRHYRNPWKAAYHHFQRYSDVRVKEEKKAMLQEIANQKGVSCRAQGWKVHLCAAQLLQLTNLEHDVYERLTNLQEGIIPKKKAATDDDLHRINELIQGNMQRCKLVMDQISEARDSMLKVLDHKDRVLKLLNKNGTVKKVSKLKRKEKV.

The tract at residues 1–95 is disordered; sequence MGPPRHPQAG…LQSREEKQEP (95 aa). Positions 40 to 54 are enriched in polar residues; sequence TGLSQAPSQIANSGS. Residues 67–80 show a composition bias toward basic and acidic residues; that stretch reads ESGRDSEVSAREHM. Residue R232 is modified to Omega-N-methylarginine. T355 bears the Phosphothreonine mark. Residues S442 and S465 each carry the phosphoserine modification. Disordered regions lie at residues 458-477, 576-617, and 649-687; these read PISG…RSDN, IGTP…PEGK, and QTHS…SEIH. Composition is skewed to polar residues over residues 590–613 and 649–667; these read GIHS…QQPQ and QTHS…SSPR. Residue K785 forms a Glycyl lysine isopeptide (Lys-Gly) (interchain with G-Cter in SUMO2) linkage. Positions 819-871 are disordered; the sequence is LSMPTSDLPPGASPRKKPRKQQHVISTEEGDMMETNSTDDEKSTAKSLLVKAE. The tract at residues 836 to 1047 is interactions with SIN3A and HDAC1; the sequence is PRKQQHVIST…KVSKLKRKEK (212 aa). Residue S855 is modified to Phosphoserine. T856 carries the phosphothreonine modification. Glycyl lysine isopeptide (Lys-Gly) (interchain with G-Cter in SUMO2) cross-links involve residues K864 and K869. Residue S875 is modified to Phosphoserine.

This sequence belongs to the SAP130 family. Component of a mSin3A corepressor complex that contains SIN3A, SAP130, SUDS3/SAP45, ARID4B/SAP180, HDAC1 and HDAC2. Interacts (released by dead or dying cells) with CLEC4E. Acetylated. Post-translationally, sumoylated with SUMO1. As to expression, expressed in various cancer cell ines.

The protein resides in the nucleus. In terms of biological role, acts as a transcriptional repressor. May function in the assembly and/or enzymatic activity of the mSin3A corepressor complex or in mediating interactions between the complex and other regulatory complexes. In Homo sapiens (Human), this protein is Histone deacetylase complex subunit SAP130 (SAP130).